The primary structure comprises 238 residues: uncharacterized protein (238 aa).

This is an uncharacterized protein from Acidianus filamentous virus 2 (isolate Italy/Pozzuoli) (AFV-2).